We begin with the raw amino-acid sequence, 354 residues long: Type II methylase M.HgiDII (354 aa).

Residues 3-344 (GAVIDLFCGV…KSIKRFLEGL (342 aa)) form the SAM-dependent MTase C5-type domain. Cys79 is a catalytic residue.

It belongs to the class I-like SAM-binding methyltransferase superfamily. C5-methyltransferase family.

The catalysed reaction is a 2'-deoxycytidine in DNA + S-adenosyl-L-methionine = a 5-methyl-2'-deoxycytidine in DNA + S-adenosyl-L-homocysteine + H(+). Its function is as follows. A methylase that recognizes the double-stranded sequence 5'-GTCGAC-3', methylates C-? on both strands and protects the DNA from cleavage by the HgiDII endonuclease. This chain is Type II methylase M.HgiDII, found in Herpetosiphon aurantiacus (Herpetosiphon giganteus).